The sequence spans 140 residues: Transcriptional regulator YdaT (140 aa).

Transcriptional regulator that causes a severe detrimental growth effect and reduces cell viability. When expressed, it alters expression of a variety of bacterial regulons normally controlled by the transcriptional regulatory protein RcsA, resulting in deficient lipopolysaccharide biosynthesis and cell division. YdaT has no effect on Rac prophage excision. Overexpression of ydaST reduces growth and leads to loss of cell viability. May contribute to toxicity and morphological defects. In Escherichia coli (strain K12), this protein is Transcriptional regulator YdaT (ydaT).